Consider the following 64-residue polypeptide: Translation machinery-associated protein 7B (64 aa).

The interval 1–38 (MSSHEGGKKKALKQPKKQAKEMDEEEKAFKQKQKEEQK) is disordered. The span at 27–38 (KAFKQKQKEEQK) shows a compositional bias: basic and acidic residues.

Belongs to the TMA7 family.

In Homo sapiens (Human), this protein is Translation machinery-associated protein 7B.